The sequence spans 452 residues: Phosphoglucosamine mutase (452 aa).

The active-site Phosphoserine intermediate is the S88. Mg(2+)-binding residues include S88, D234, D236, and D238. The residue at position 88 (S88) is a Phosphoserine.

It belongs to the phosphohexose mutase family. The cofactor is Mg(2+). Post-translationally, activated by phosphorylation.

It catalyses the reaction alpha-D-glucosamine 1-phosphate = D-glucosamine 6-phosphate. Catalyzes the conversion of glucosamine-6-phosphate to glucosamine-1-phosphate. This Methanococcus aeolicus (strain ATCC BAA-1280 / DSM 17508 / OCM 812 / Nankai-3) protein is Phosphoglucosamine mutase.